Consider the following 386-residue polypeptide: Heat-inducible transcription repressor HrcA (386 aa).

The protein belongs to the HrcA family.

Functionally, negative regulator of class I heat shock genes (grpE-dnaK-dnaJ and groELS operons). Prevents heat-shock induction of these operons. The polypeptide is Heat-inducible transcription repressor HrcA (Chlamydia abortus (strain DSM 27085 / S26/3) (Chlamydophila abortus)).